We begin with the raw amino-acid sequence, 203 residues long: LexA repressor (203 aa).

The segment at residues 28 to 48 (RAEIASQLGFRSPNAAEEHLK) is a DNA-binding region (H-T-H motif). Active-site for autocatalytic cleavage activity residues include S120 and K157.

This sequence belongs to the peptidase S24 family. As to quaternary structure, homodimer.

It catalyses the reaction Hydrolysis of Ala-|-Gly bond in repressor LexA.. Functionally, represses a number of genes involved in the response to DNA damage (SOS response), including recA and lexA. Binds to the 16 bp palindromic sequence 5'-CTGTATATATATACAG-3'. In the presence of single-stranded DNA, RecA interacts with LexA causing an autocatalytic cleavage which disrupts the DNA-binding part of LexA, leading to derepression of the SOS regulon and eventually DNA repair. The polypeptide is LexA repressor (Proteus mirabilis (strain HI4320)).